An 89-amino-acid polypeptide reads, in one-letter code: MANHKSAEKRIRQTIKRTERNRFYKTKVKNIIKAVREAVAVNDVAKAQERLKIANKELHKFVSKGILKKNTASRKVSRLNASVKKIALA.

Belongs to the bacterial ribosomal protein bS20 family.

Its function is as follows. Binds directly to 16S ribosomal RNA. The chain is Small ribosomal subunit protein bS20 from Helicobacter pylori (strain Shi470).